The chain runs to 485 residues: FAD-dependent monooxygenase elcH (485 aa).

Residues 1 to 19 (MFTLRSLAILAVFAATALA) form the signal peptide. The FAD site is built by Asp-59 and Gly-73. Asn-126, Asn-147, and Asn-157 each carry an N-linked (GlcNAc...) asparagine glycan.

Belongs to the paxM FAD-dependent monooxygenase family. FAD is required as a cofactor.

It functions in the pathway secondary metabolite biosynthesis. FAD-dependent monooxygenase; part of the gene cluster that mediates the biosynthesis of elsinochrome C, a perelyenequinone phytotoxin structurally similar to cercosporin. The first step of elsinochrome C biosynthesis is performed by the polyketide synthase elcA which catalyzes the formation of nor-toralactone. The starter unit acyltransferase (SAT) domain of elcA initiates polyketide extension by the selective utilization of acetyl-CoA, which is elongated to the heptaketide in the beta-ketoacyl synthase (KS) domain by successive condensations with six malonyl units introduced by the malonyl acyltransferase (MAT) domain. The product template (PT) domain catalyzes C4-C9 and C2-C11 aldol cyclizations and dehydrations to a trihydroxynaphthalene, which is thought to be delivered to the thioesterase (TE) domain for product release. The bifunctional enzyme elcB then methylates nor-toralactone to toralactone before conducting an unusual oxidative aromatic ring opening. The next step in perylenequinone biosynthesis is an O-methylation at the nascent OH-6 of the elcB product performed by the O-methyltransferase elcD. The oxidative coupling of the two monomeric naphthol units in perylenequinone biosynthesis is catalyzed by the FAD-dependent monooxygenase elcE and the multicopper oxidase elcG. ElcG might catalyze the first intermolecular coupling in a regio- and stereo-selective manner via a phenol radical coupling mechanism and the elcE could forge the second C-C bond intramolecularly via a hydride transfer mechanism. The fasciclin domain-containing protein elcF might also play a role duting this step. The last piece of the puzzle in the biosynthesis of elsinochrome C is the additional annulation by enolate coupling to afford the dihydrobenzo(ghi)perylenequinone system, catalyzed by the FAD-dependent monooxygenase elcH. This Phaeosphaeria nodorum (strain SN15 / ATCC MYA-4574 / FGSC 10173) (Glume blotch fungus) protein is FAD-dependent monooxygenase elcH.